A 679-amino-acid polypeptide reads, in one-letter code: Patatin-like phospholipase 1 (679 aa).

2 disordered regions span residues 19–45 (FSDD…NAEN) and 155–194 (GEYE…NYNS). 2 stretches are compositionally biased toward polar residues: residues 35-45 (YSGSETQNAEN) and 162-176 (TSSY…NTVG). Residues 177 to 188 (SEKEETENKNEE) show a composition bias toward basic and acidic residues. The PNPLA domain maps to 338–544 (LSLDGGGILT…KASNPALIAL (207 aa)). Positions 381–385 (GTSAG) match the GXSXG motif. The active-site Nucleophile is the S383. The active-site Proton acceptor is D531. The DGA/G motif lies at 531–533 (DGA).

Belongs to the patatin family.

The protein localises to the cytoplasm. It catalyses the reaction a 1,2-diacyl-sn-glycero-3-phosphocholine + H2O = a 1-acyl-sn-glycero-3-phosphocholine + a fatty acid + H(+). The catalysed reaction is 1,2-dihexadecanoyl-sn-glycero-3-phosphocholine + H2O = 1-hexadecanoyl-sn-glycero-3-phosphocholine + hexadecanoate + H(+). Hydrolyzes the ester bond of the fatty acyl group attached at the sn-2 position of phospholipids such as phosphatidylcholine. Involved in gametogenesis; however, it is not clear whether it is involved in gametocytes development in host erythrocytes or in gametocyte activation in the mosquito midgut. Involved in gametocyte development in host erythrocytes; however, not involved in gametocytes activation including male gamete exflagellation. Involved in the rounding up of gametocytes following activation in the mosquito midgut; however, not required for gametocyte development in host erythrocytes. Required for exflagellation of activated male gametocytes. Involved in gametocytes egress from host erythrocytes by promoting the relocalization of perforin-like protein PLP2-containing vesicles to the periphery of gametocytes; PLP2 secretion is required for permeabilization of the erythrocyte membrane and thus, promotes gametocyte egress. Dispensable for asexual blood stage development. This is Patatin-like phospholipase 1 from Plasmodium falciparum (isolate NF54).